We begin with the raw amino-acid sequence, 619 residues long: Zinc finger protein 668 (619 aa).

Residue Met-1 is modified to N-acetylmethionine. Ser-10 is modified (phosphoserine). The segment at 22–44 (YKCLSCTKTFPNAPRAARHAATH) adopts a C2H2-type 1 zinc-finger fold. Positions 34–79 (APRAARHAATHGPADCSEEVAEVKPKPETEAKAEEASGEKVSGSAA) are disordered. Residues 54–71 (AEVKPKPETEAKAEEASG) are compositionally biased toward basic and acidic residues. Glycyl lysine isopeptide (Lys-Gly) (interchain with G-Cter in SUMO2) cross-links involve residues Lys-57, Lys-59, Lys-65, and Lys-80. 11 C2H2-type zinc fingers span residues 84 to 106 (YACP…GRSH), 112 to 134 (FPCP…LASH), 140 to 162 (FRCA…QRGH), 168 to 190 (YACA…RRTH), 196 to 218 (YSCE…ERSH), 224 to 246 (FLCS…QRIH), 252 to 274 (YRCP…ERTH), 280 to 302 (FLCP…QRAH), 308 to 330 (YHCE…RRVH), 336 to 358 (FKCL…ALVH), and 364 to 386 (FRCE…SRVH). A Glycyl lysine isopeptide (Lys-Gly) (interchain with G-Cter in SUMO2) cross-link involves residue Lys-154. Ser-387 is subject to Phosphoserine. A C2H2-type 13 zinc finger spans residues 392–414 (FHCNACGKSFVVSSSLRKHERTH). Positions 492 to 513 (REAPGPLEGAGEAGGEEADEKP) are disordered. Lys-512 is covalently cross-linked (Glycyl lysine isopeptide (Lys-Gly) (interchain with G-Cter in SUMO2)). 3 C2H2-type zinc fingers span residues 516–538 (FVCR…ERSH), 544–566 (FPCT…SRTH), and 572–594 (YTCP…ERTH).

Belongs to the krueppel C2H2-type zinc-finger protein family.

It localises to the nucleus. In terms of biological role, may be involved in transcriptional regulation. May play a role in DNA repair process. In Homo sapiens (Human), this protein is Zinc finger protein 668 (ZNF668).